A 162-amino-acid polypeptide reads, in one-letter code: ATP synthase subunit b (162 aa).

The helical transmembrane segment at 6–28 threads the bilayer; it reads LVTFVLTIVNILVLFYLLKRFLF.

The protein belongs to the ATPase B chain family. In terms of assembly, F-type ATPases have 2 components, F(1) - the catalytic core - and F(0) - the membrane proton channel. F(1) has five subunits: alpha(3), beta(3), gamma(1), delta(1), epsilon(1). F(0) has three main subunits: a(1), b(2) and c(10-14). The alpha and beta chains form an alternating ring which encloses part of the gamma chain. F(1) is attached to F(0) by a central stalk formed by the gamma and epsilon chains, while a peripheral stalk is formed by the delta and b chains.

It is found in the cell membrane. F(1)F(0) ATP synthase produces ATP from ADP in the presence of a proton or sodium gradient. F-type ATPases consist of two structural domains, F(1) containing the extramembraneous catalytic core and F(0) containing the membrane proton channel, linked together by a central stalk and a peripheral stalk. During catalysis, ATP synthesis in the catalytic domain of F(1) is coupled via a rotary mechanism of the central stalk subunits to proton translocation. Functionally, component of the F(0) channel, it forms part of the peripheral stalk, linking F(1) to F(0). This chain is ATP synthase subunit b, found in Natranaerobius thermophilus (strain ATCC BAA-1301 / DSM 18059 / JW/NM-WN-LF).